Reading from the N-terminus, the 547-residue chain is Chaperonin GroEL (547 aa).

ATP is bound by residues T30–P33, K51, D87–T91, G415, N479–A481, and D495. Residues K526 to M547 form a disordered region. The segment covering G538–M547 has biased composition (gly residues).

The protein belongs to the chaperonin (HSP60) family. In terms of assembly, forms a cylinder of 14 subunits composed of two heptameric rings stacked back-to-back. Interacts with the co-chaperonin GroES.

Its subcellular location is the cytoplasm. It catalyses the reaction ATP + H2O + a folded polypeptide = ADP + phosphate + an unfolded polypeptide.. Its function is as follows. Together with its co-chaperonin GroES, plays an essential role in assisting protein folding. The GroEL-GroES system forms a nano-cage that allows encapsulation of the non-native substrate proteins and provides a physical environment optimized to promote and accelerate protein folding. In Buchnera aphidicola subsp. Tetraneura caerulescens, this protein is Chaperonin GroEL.